Reading from the N-terminus, the 497-residue chain is uncharacterized protein (497 aa).

Helical transmembrane passes span Trp-91–Leu-111, Val-119–Ser-139, Leu-149–Tyr-169, Ala-179–Leu-199, Ile-215–Ile-235, Met-283–Phe-303, Leu-319–Ile-339, Met-347–Ala-367, Leu-374–Ile-394, Phe-406–Phe-426, and Val-439–Asn-459.

It belongs to the major facilitator superfamily. Allantoate permease family.

It is found in the golgi apparatus. The protein localises to the membrane. This is an uncharacterized protein from Schizosaccharomyces pombe (strain 972 / ATCC 24843) (Fission yeast).